A 223-amino-acid chain; its full sequence is Endonuclease III (223 aa).

One can recognise a HhH domain in the interval 118 to 137; that stretch reads RDFLTAIEGIGDKTADVVLL. The [4Fe-4S] cluster site is built by cysteine 198, cysteine 205, cysteine 208, and cysteine 214.

The protein belongs to the Nth/MutY family. The cofactor is [4Fe-4S] cluster.

It carries out the reaction 2'-deoxyribonucleotide-(2'-deoxyribose 5'-phosphate)-2'-deoxyribonucleotide-DNA = a 3'-end 2'-deoxyribonucleotide-(2,3-dehydro-2,3-deoxyribose 5'-phosphate)-DNA + a 5'-end 5'-phospho-2'-deoxyribonucleoside-DNA + H(+). Functionally, probably part of a 4-gene DNA damage response locus in which the upstream ups system, in combination with this downstream locus, functions in homologous recombination to rescue Sulfolobales from DNA-damaging threats. DNA repair enzyme that has both DNA N-glycosylase activity and AP-lyase activity. The DNA N-glycosylase activity releases various damaged pyrimidines from DNA by cleaving the N-glycosidic bond, leaving an AP (apurinic/apyrimidinic) site. The AP-lyase activity cleaves the phosphodiester bond 3' to the AP site by a beta-elimination, leaving a 3'-terminal unsaturated sugar and a product with a terminal 5'-phosphate. Nicks UV-treated plasmid DNA in a dose-dependent manner, has no activity on untreated DNA. The sequence is that of Endonuclease III from Sulfolobus acidocaldarius (strain ATCC 33909 / DSM 639 / JCM 8929 / NBRC 15157 / NCIMB 11770).